We begin with the raw amino-acid sequence, 294 residues long: Cytosolic Fe-S cluster assembly factor CFD1 (294 aa).

25 to 32 (GKGGVGKS) provides a ligand contact to ATP. Residues Cys-214 and Cys-217 each contribute to the [4Fe-4S] cluster site.

It belongs to the Mrp/NBP35 ATP-binding proteins family. NUBP2/CFD1 subfamily. Heterotetramer of 2 NBP35 and 2 CFD1 chains. It depends on [4Fe-4S] cluster as a cofactor.

The protein resides in the cytoplasm. Component of the cytosolic iron-sulfur (Fe/S) protein assembly (CIA) machinery. Required for maturation of extramitochondrial Fe-S proteins. The NBP35-CFD1 heterotetramer forms a Fe-S scaffold complex, mediating the de novo assembly of an Fe-S cluster and its transfer to target apoproteins. Required for biogenesis and export of both ribosomal subunits, which may reflect a role in assembly of the Fe/S clusters in RLI1, a protein which performs rRNA processing and ribosome export. In Candida albicans (strain SC5314 / ATCC MYA-2876) (Yeast), this protein is Cytosolic Fe-S cluster assembly factor CFD1.